The following is a 502-amino-acid chain: ATP synthase subunit alpha (502 aa).

Positions 115-135 (VDGLGPINTTNTRPIESPAPG) are disordered. 169–176 (GDRQTGKT) contacts ATP.

Belongs to the ATPase alpha/beta chains family. As to quaternary structure, F-type ATPases have 2 components, CF(1) - the catalytic core - and CF(0) - the membrane proton channel. CF(1) has five subunits: alpha(3), beta(3), gamma(1), delta(1), epsilon(1). CF(0) has three main subunits: a(1), b(2) and c(9-12). The alpha and beta chains form an alternating ring which encloses part of the gamma chain. CF(1) is attached to CF(0) by a central stalk formed by the gamma and epsilon chains, while a peripheral stalk is formed by the delta and b chains.

The protein localises to the cell membrane. It carries out the reaction ATP + H2O + 4 H(+)(in) = ADP + phosphate + 5 H(+)(out). Produces ATP from ADP in the presence of a proton gradient across the membrane. The alpha chain is a regulatory subunit. The sequence is that of ATP synthase subunit alpha from Bacillus cereus (strain B4264).